The chain runs to 249 residues: 15,16-dihydrobiliverdin:ferredoxin oxidoreductase (249 aa).

This sequence belongs to the HY2 family.

The enzyme catalyses 15,16-dihydrobiliverdin + oxidized 2[4Fe-4S]-[ferredoxin] = biliverdin IXalpha + reduced 2[4Fe-4S]-[ferredoxin] + 2 H(+). Functionally, catalyzes the two-electron reduction of biliverdin IX-alpha at the C15 methine bridge. This is 15,16-dihydrobiliverdin:ferredoxin oxidoreductase from Prochlorococcus marinus (strain MIT 9303).